The following is a 412-amino-acid chain: L-threonine:uridine-5'-aldehyde transaldolase (412 aa).

An N6-(pyridoxal phosphate)lysine modification is found at Lys-229.

This sequence belongs to the SHMT family. Pyridoxal 5'-phosphate serves as cofactor.

The enzyme catalyses uridine-5'-aldehyde + L-threonine = (5'S,6'S)-C-glycyluridine + acetaldehyde. Its pathway is antibiotic biosynthesis. Transaldolase involved in the biosynthesis of the capuramycin-type nucleoside antibiotic A-503083. Catalyzes the condensation of L-threonine and uridine-5'-aldehyde to form 5'-C-glycyluridine (GlyU). Forms (5'S,6'S)-GlyU. This is L-threonine:uridine-5'-aldehyde transaldolase from Streptomyces sp.